A 633-amino-acid polypeptide reads, in one-letter code: Extracellular metalloproteinase 3 (633 aa).

Positions M1–A18 are cleaved as a signal peptide. Residues H19 to S246 constitute a propeptide that is removed on maturation. Residue N410 is glycosylated (N-linked (GlcNAc...) asparagine). Residue H429 participates in Zn(2+) binding. The active site involves E430. H433 lines the Zn(2+) pocket. N480 and N622 each carry an N-linked (GlcNAc...) asparagine glycan.

The protein belongs to the peptidase M36 family. Zn(2+) serves as cofactor.

It localises to the secreted. Functionally, secreted metalloproteinase probably acting as a virulence factor. The chain is Extracellular metalloproteinase 3 (MEP3) from Trichophyton tonsurans (Scalp ringworm fungus).